The primary structure comprises 229 residues: 23 kDa piroplasm membrane protein (229 aa).

Positions 1 to 19 (MNKYFKVFFFVLLTHALKS) are cleaved as a signal peptide. Residues 20 to 203 (SLIFGQATLQ…EKEETSKKKY (184 aa)) lie on the Extracellular side of the membrane. The chain crosses the membrane as a helical span at residues 204–224 (VLMVVVVVVFVVVASLVVFLV). Topologically, residues 225 to 229 (KFCLK) are cytoplasmic.

The protein resides in the membrane. This is 23 kDa piroplasm membrane protein from Theileria annulata.